The primary structure comprises 397 residues: Elongation factor Tu (397 aa).

Positions 10–207 (KPHVNVGTVG…AIDAYVPDPV (198 aa)) constitute a tr-type G domain. The interval 19–26 (GHIDHGKT) is G1. 19-26 (GHIDHGKT) lines the GTP pocket. Thr26 lines the Mg(2+) pocket. The interval 60–64 (GITIA) is G2. The segment at 81–84 (DCPG) is G3. Residues 81–85 (DCPGH) and 136–139 (NKVD) contribute to the GTP site. The tract at residues 136 to 139 (NKVD) is G4. Residues 174–176 (SAL) are G5.

Belongs to the TRAFAC class translation factor GTPase superfamily. Classic translation factor GTPase family. EF-Tu/EF-1A subfamily. In terms of assembly, monomer.

It localises to the cytoplasm. The enzyme catalyses GTP + H2O = GDP + phosphate + H(+). Functionally, GTP hydrolase that promotes the GTP-dependent binding of aminoacyl-tRNA to the A-site of ribosomes during protein biosynthesis. The protein is Elongation factor Tu of Syntrophobacter fumaroxidans (strain DSM 10017 / MPOB).